We begin with the raw amino-acid sequence, 668 residues long: MAP kinase kinase PBS2 (668 aa).

Over residues 1-15 the composition is skewed to basic and acidic residues; it reads MEDKFANLSLHEKTG. Disordered stretches follow at residues 1-43, 61-120, and 181-313; these read MEDK…SSHY, RALK…ASSK, and NPNR…GSSG. 3 stretches are compositionally biased toward polar residues: residues 16–43, 68–91, and 104–120; these read KSSI…SSHY, SVGS…QQIV, and SKVS…ASSK. A Phosphoserine modification is found at S68. Residues 239-250 are compositionally biased toward low complexity; sequence AQQPQQFAPSPS. S269 carries the post-translational modification Phosphoserine. Over residues 270 to 300 the composition is skewed to polar residues; sequence NPGSLINGVQSTSTSSSTEGPHDTVGTTPRT. Positions 301–310 are enriched in low complexity; it reads GNSNNSSNSG. One can recognise a Protein kinase domain in the interval 360 to 623; it reads LEFLDELGHG…YAALTEHPWL (264 aa). ATP contacts are provided by residues 366-374 and K389; that span reads LGHGNYGNV. The Proton acceptor role is filled by D485. A Phosphoserine modification is found at S514. At T518 the chain carries Phosphothreonine.

This sequence belongs to the protein kinase superfamily. STE Ser/Thr protein kinase family. MAP kinase kinase subfamily. In terms of assembly, interacts with NBP2, PTC1, SHO1 and STE11. In terms of processing, activated by phosphorylation by SSK2 or SSK22. Ser/Thr phosphorylation is also necessary for SHO1-mediated activation.

The protein localises to the cytoplasm. The catalysed reaction is L-seryl-[protein] + ATP = O-phospho-L-seryl-[protein] + ADP + H(+). It catalyses the reaction L-threonyl-[protein] + ATP = O-phospho-L-threonyl-[protein] + ADP + H(+). The enzyme catalyses L-tyrosyl-[protein] + ATP = O-phospho-L-tyrosyl-[protein] + ADP + H(+). In terms of biological role, kinase involved in a signal transduction pathway that is activated by changes in the osmolarity of the extracellular environment. Activates the MAP kinase HOG1 by concomitant phosphorylation at 'Thr-174' and 'Tyr-176'. The sequence is that of MAP kinase kinase PBS2 (PBS2) from Saccharomyces cerevisiae (strain ATCC 204508 / S288c) (Baker's yeast).